Consider the following 222-residue polypeptide: UPF0128 protein PF1488 (222 aa).

Belongs to the UPF0128 family.

The chain is UPF0128 protein PF1488 from Pyrococcus furiosus (strain ATCC 43587 / DSM 3638 / JCM 8422 / Vc1).